Consider the following 3788-residue polypeptide: Lysosomal-trafficking regulator (3788 aa).

2 disordered regions span residues 148 to 180 (KSTHRYSVRDARKTQLSTSDSEGNSDEKSTVVS) and 198 to 217 (EGHLVAKPDPSATKEQVLSD). Position 164 is a phosphoserine (S164). At T165 the chain carries Phosphothreonine. Phosphoserine is present on S166. One copy of the WD 1 repeat lies at 662–700 (GPTSGLPSPSYRFQGILPSSGSEDLLWKWDALEAYQSFV). Disordered regions lie at residues 1169 to 1196 (LGPGDAVTEKSHPSEEELLSQPGDFSEE), 1213 to 1240 (GYEADSESNPEDVDTQDDGVELNPEAEG), and 1482 to 1519 (ESAAERGKRVKKRNKPSVLEDSSFEGAEGDRPEVTESI). Over residues 1213–1232 (GYEADSESNPEDVDTQDDGV) the composition is skewed to acidic residues. Phosphoserine occurs at positions 1503 and 1504. The WD 2 repeat unit spans residues 1576-1620 (SQENIFFPSKWQHLVLTYIQHPQGKKNVHGEISIWVSGQRKTDVI). S2099, S2118, S2203, S2207, and S2254 each carry phosphoserine. The tract at residues 2177-2221 (ANGVSRGSPRFPRARVDHKDVGTEPRSDDDSPGDESYPRRPDNLK) is disordered. A compositionally biased stretch (basic and acidic residues) spans 2190–2205 (ARVDHKDVGTEPRSDD). Disordered regions lie at residues 2556 to 2581 (HDSESPVHSPSAHRHSVPPKRRSIAG) and 2659 to 2681 (NTSQSKTSVSQTEISEEDMHHEQ). A compositionally biased stretch (basic residues) spans 2566–2578 (SAHRHSVPPKRRS). The segment covering 2659-2671 (NTSQSKTSVSQTE) has biased composition (polar residues). Residues 2996–3102 (AASESIRVNR…VRDDVYQSIL (107 aa)) enclose the BEACH-type PH domain. Residues 3126 to 3409 (QITNFEYLTH…QLFHTAHASR (284 aa)) form the BEACH domain. WD repeat units lie at residues 3550-3589 (SQQHQVTSCAWVPDSCQLFTGSKCGVITAYTNRLTSSTPS), 3601-3640 (GHTEEITGLCVCKPYSVMISVSRDGTCIVWDLNRLCYVQS), 3643-3686 (GHKS…VGHV), 3687-3731 (HCRE…PVRE), and 3736-3775 (KSNKPIISLTFSCDGHHLYTANSEGTVIAWCRKDQQRVKL).

Interacts with CPAP, LIP8 and ZNF521. As to expression, expressed in the heart, lung, liver, spleen, brain and in different immune cell types (purified B and T lymphocytes, bone marrow-derived macrophages and dendritic cells).

It localises to the cytoplasm. In terms of biological role, adapter protein that regulates and/or fission of intracellular vesicles such as lysosomes. Might regulate trafficking of effectors involved in exocytosis. In cytotoxic T-cells and natural killer (NK) cells, has role in the regulation of size, number and exocytosis of lytic granules. In macrophages and dendritic cells, regulates phagosome maturation by controlling the conversion of early phagosomal compartments into late phagosomes. In macrophages and dendritic cells, specifically involved in TLR3- and TLR4-induced production of pro-inflammatory cytokines by regulating the endosomal TLR3- TICAM1/TRIF and TLR4- TICAM1/TRIF signaling pathways. This is Lysosomal-trafficking regulator (Lyst) from Mus musculus (Mouse).